The chain runs to 502 residues: MSKDFILAIDQGTTSSRAIIFDKKGNIRKIAQKEFTQIYPKSGWVEHDAMEIWGTQSGVMREALEFGRVKPDQIAAIGITNQRETVVVWDKETGDPVYNAIVWQCRRTSSICDEIKRDPQFVKYIKENTGLVVDAYFSGTKVKWILDNVEGAREKANAGKLLMGTIDTWLIWNLTRGKVHATDYSNASRTMLFNINSLEWDKKILDYLNIPESMLPEVKNSSEVFGVTDSHTLGGAEIPIAGVAGDQHAALFGHCCFEKGMAKNTYGTGCFALMNVGDKPVYSDEGLLTTIAWAENGKPTYALEGSIFIVGAVIQWIRDGLGLVRSAEDSEYYATKIDSTNGVYLVPAFVGLGTPYWDMYARGTIVGITRDTKREHIIRAALEAIAYQAKDVLECMKEDTGLDLAGLRVDGGAVQNNFLMQFQSDILQSEISKPKINEITSLGAVFLAGLAVGFWKDKQELKSILTTEKVFEPQKDSQAVAHDYRGWKKAVERSKAWAECYS.

Thr-13 is a binding site for ADP. ATP contacts are provided by Thr-13, Thr-14, and Ser-15. Residue Thr-13 participates in sn-glycerol 3-phosphate binding. Arg-17 contributes to the ADP binding site. Sn-glycerol 3-phosphate-binding residues include Arg-83, Glu-84, Tyr-136, and Asp-246. Glycerol contacts are provided by Arg-83, Glu-84, Tyr-136, Asp-246, and Gln-247. Residues Thr-268 and Gly-311 each coordinate ADP. The ATP site is built by Thr-268, Gly-311, Gln-315, and Gly-412. Residues Gly-412 and Asn-416 each contribute to the ADP site.

Belongs to the FGGY kinase family.

It catalyses the reaction glycerol + ATP = sn-glycerol 3-phosphate + ADP + H(+). The protein operates within polyol metabolism; glycerol degradation via glycerol kinase pathway; sn-glycerol 3-phosphate from glycerol: step 1/1. With respect to regulation, inhibited by fructose 1,6-bisphosphate (FBP). Its function is as follows. Key enzyme in the regulation of glycerol uptake and metabolism. Catalyzes the phosphorylation of glycerol to yield sn-glycerol 3-phosphate. The sequence is that of Glycerol kinase from Francisella tularensis subsp. holarctica (strain FTNF002-00 / FTA).